A 534-amino-acid chain; its full sequence is MRMQRRHLLKNAAAALAALGLPALPQWALAAKAVGLRRLGQPQPFDYAWLKGRARELAKAPYKSHKQVLPGPLEALNWDQYQSIRYRQDHALWADGNGKFQAKFFHLGLYFHTPVHIYDIVDGKAQQLAYDPAAFDYGKSGLGGKQLPKDLGFAGFRLNTRKDTERDFSAFLGASYFRAVGKEGQYGQSARGLAIDTGTGGPEEFPDFIAYYLEQPAADSNTVVVYGLLDSPSIAGAYRFAITNGDVLLMDIDSALYPRKTIERLGIGPCTSMYQVGENDNRMDWDWRPEIHDTDGLAMWTGGGEWIWRPLCNPPHVRFNMFVDENPRGFGLLQRDRNFDHYQDDGVFYEKRPCLWVEPKSGWGKGSVQLVEIPTVDETFDNIVAFWNPQAKPQPGQELLMGYRLYWGVQPPASAPLAHCVATRTGLGGIVGQKRSHFSWRFAVDFAGGELAALAKDPKAKVEAVLQVSRGTTEIVSARPLHELKGYRAMFDLVPPDEGTQQIDIRLYLRANGKPLTETWLYQWTPLAASERKN.

Residues 1–30 constitute a signal peptide (tat-type signal); the sequence is MRMQRRHLLKNAAAALAALGLPALPQWALA.

It belongs to the OpgD/OpgG family. In terms of processing, predicted to be exported by the Tat system. The position of the signal peptide cleavage has not been experimentally proven.

It localises to the periplasm. It functions in the pathway glycan metabolism; osmoregulated periplasmic glucan (OPG) biosynthesis. In terms of biological role, probably involved in the control of the structural glucose backbone of osmoregulated periplasmic glucans (OPGs). The protein is Glucans biosynthesis protein D of Xanthomonas oryzae pv. oryzae (strain KACC10331 / KXO85).